A 124-amino-acid polypeptide reads, in one-letter code: Fluoride-specific ion channel FluC (124 aa).

Transmembrane regions (helical) follow at residues 1-21 (MIPLILAVSAGGVAGTLLRFA), 38-58 (TLAVNIVGCLLIGVLYGLFLV), 69-89 (GLIVGFLGGLTTFSSFSLDTV), and 97-117 (VALALGYAALSVFGGLLATWA). Na(+) contacts are provided by Gly-76 and Thr-79.

Belongs to the fluoride channel Fluc/FEX (TC 1.A.43) family.

It localises to the cell inner membrane. The enzyme catalyses fluoride(in) = fluoride(out). Na(+) is not transported, but it plays an essential structural role and its presence is essential for fluoride channel function. Functionally, fluoride-specific ion channel. Important for reducing fluoride concentration in the cell, thus reducing its toxicity. The polypeptide is Fluoride-specific ion channel FluC (Pseudomonas fluorescens (strain ATCC BAA-477 / NRRL B-23932 / Pf-5)).